Consider the following 130-residue polypeptide: Large ribosomal subunit protein bL12 (130 aa).

This sequence belongs to the bacterial ribosomal protein bL12 family. In terms of assembly, homodimer. Part of the ribosomal stalk of the 50S ribosomal subunit. Forms a multimeric L10(L12)X complex, where L10 forms an elongated spine to which 2 to 4 L12 dimers bind in a sequential fashion. Binds GTP-bound translation factors.

Functionally, forms part of the ribosomal stalk which helps the ribosome interact with GTP-bound translation factors. Is thus essential for accurate translation. This Mycolicibacterium gilvum (strain PYR-GCK) (Mycobacterium gilvum (strain PYR-GCK)) protein is Large ribosomal subunit protein bL12.